The chain runs to 400 residues: MSKAMISRENYLQQLIQFKDTDFIKVISGVRRSGKSVLLMQYRDYLQQQGIASENILYLNFESFEYQWVKDAQDFQQLIQEKMPSSQEKIYFLIDEIQFVEGWQKIVNALRVSFNTDIVITGSNANLLSGELATLLSGRYVEIKIYPLSFKEFLHAKNVDSQSRLVDKLYSEYEKYGGFPSVVMADEPLKETILSGIFDSIVLNDIAHRAGVKDTHILKSVILFLADNVGQLVNPSKISNTLTSERVPTSNHTISKYLDLLENAFLFYKAKQYDIRGKGYLKTNAKYFIVDNGLRRHAIGKKGANYANRLENIVFIELLRRGYSVDVGKLDSKEIDFIARKADEILYVQVAFEIPENTHETDNLLHIKDNYKKILITGKYYEQTEIDGIEVIYVVDWLLQ.

This sequence to M.jannaschii MJ1544 and MJ1637.

This is an uncharacterized protein from Haemophilus influenzae (strain ATCC 51907 / DSM 11121 / KW20 / Rd).